Consider the following 184-residue polypeptide: Photosystem I assembly protein Ycf4 (184 aa).

2 consecutive transmembrane segments (helical) span residues 19–39 (LSNF…LLVG) and 57–77 (FIFF…LFIS).

It belongs to the Ycf4 family.

The protein localises to the plastid. It is found in the chloroplast thylakoid membrane. Functionally, seems to be required for the assembly of the photosystem I complex. The chain is Photosystem I assembly protein Ycf4 from Jasminum nudiflorum (Winter jasmine).